The chain runs to 435 residues: Glutamate-1-semialdehyde 2,1-aminomutase (435 aa).

An N6-(pyridoxal phosphate)lysine modification is found at lysine 266.

This sequence belongs to the class-III pyridoxal-phosphate-dependent aminotransferase family. HemL subfamily. In terms of assembly, homodimer. Requires pyridoxal 5'-phosphate as cofactor.

It localises to the cytoplasm. The enzyme catalyses (S)-4-amino-5-oxopentanoate = 5-aminolevulinate. The protein operates within porphyrin-containing compound metabolism; protoporphyrin-IX biosynthesis; 5-aminolevulinate from L-glutamyl-tRNA(Glu): step 2/2. The protein is Glutamate-1-semialdehyde 2,1-aminomutase of Helicobacter hepaticus (strain ATCC 51449 / 3B1).